Here is a 761-residue protein sequence, read N- to C-terminus: Neurotrypsin (761 aa).

The N-terminal stretch at 1–21 (MALARCVLAVILGALSVVARA) is a signal peptide. The segment at 25–87 (SRSPLHRPHP…PPTIPRRCGA (63 aa)) is disordered. Residues 38–48 (RSQHAHYLPSS) show a composition bias toward low complexity. One can recognise a Kringle domain in the interval 85-157 (CGAGESWGNA…GKVDWGYCDC (73 aa)). 17 disulfide bridges follow: Cys85–Cys157, Cys101–Cys141, Cys130–Cys155, Cys191–Cys255, Cys204–Cys265, Cys235–Cys245, Cys298–Cys361, Cys311–Cys371, Cys341–Cys351, Cys411–Cys475, Cys424–Cys485, Cys455–Cys465, Cys505–Cys636, Cys547–Cys563, Cys651–Cys717, Cys680–Cys694, and Cys707–Cys736. Asn93 is a glycosylation site (N-linked (GlcNAc...) asparagine). SRCR domains follow at residues 166-267 (IRLV…SCVP), 273-373 (IRLA…TCYP), and 386-487 (IRLV…ICDY). The segment at 505–516 (CGLRLLHRRQKR) is zymogen activation region. One can recognise a Peptidase S1 domain in the interval 517–760 (IIGGNNSLRG…FVPWIKSVTS (244 aa)). Asn521 is a glycosylation site (N-linked (GlcNAc...) asparagine). His562 serves as the catalytic Charge relay system. N-linked (GlcNAc...) asparagine glycosylation occurs at Asn569. Asp612 serves as the catalytic Charge relay system. The active-site Charge relay system is Ser711.

The protein belongs to the peptidase S1 family. Most abundant in cerebral cortex, hippocampus and amygdala.

The protein resides in the secreted. In terms of biological role, plays a role in neuronal plasticity and the proteolytic action may subserve structural reorganizations associated with learning and memory operations. The protein is Neurotrypsin (Prss12) of Mus musculus (Mouse).